A 357-amino-acid chain; its full sequence is MSQPEFLPIQWKSTFLSLLDQRVLPGKKEFLQIQTMEETIVAIREMAVRGAPAIAITGIFGITLGAKKKSGNSNPVDVDSLIKQVFESRPTAVNLSFALKEAKKRVEGVSHWDSIAKVWESYALEMMVQDLKANQTLGKNGADLFPKNQNEFHIITHCNTGALATAGHGTALGVIRSLRDQGKKVVVYADETRPFLQGSRLTAFEMMEEGIECYIITDGMSGWLMNHRKIDAVLVGCDRVATNGDTANKIGTYNLAIVAYEHKVPFYVCATKDSFDLKLKTGDEIPIEMRKESEVTQFDFLKNEEGNFLFPEGKTSPIGARALNPSFDITKAKFIKNFITELGCFVPEEISFRLKNV.

Residues Arg49–Ala51, Arg89, and Gln197 contribute to the substrate site. Asp238 serves as the catalytic Proton donor. Asn248 to Lys249 serves as a coordination point for substrate.

The protein belongs to the eIF-2B alpha/beta/delta subunits family. MtnA subfamily.

It catalyses the reaction 5-(methylsulfanyl)-alpha-D-ribose 1-phosphate = 5-(methylsulfanyl)-D-ribulose 1-phosphate. Its pathway is amino-acid biosynthesis; L-methionine biosynthesis via salvage pathway; L-methionine from S-methyl-5-thio-alpha-D-ribose 1-phosphate: step 1/6. In terms of biological role, catalyzes the interconversion of methylthioribose-1-phosphate (MTR-1-P) into methylthioribulose-1-phosphate (MTRu-1-P). In Leptospira biflexa serovar Patoc (strain Patoc 1 / Ames), this protein is Methylthioribose-1-phosphate isomerase.